We begin with the raw amino-acid sequence, 191 residues long: Fe/S biogenesis protein NfuA (191 aa).

Residues Cys149 and Cys152 each contribute to the [4Fe-4S] cluster site.

Belongs to the NfuA family. Homodimer. The cofactor is [4Fe-4S] cluster.

In terms of biological role, involved in iron-sulfur cluster biogenesis. Binds a 4Fe-4S cluster, can transfer this cluster to apoproteins, and thereby intervenes in the maturation of Fe/S proteins. Could also act as a scaffold/chaperone for damaged Fe/S proteins. This is Fe/S biogenesis protein NfuA from Sodalis glossinidius (strain morsitans).